A 474-amino-acid polypeptide reads, in one-letter code: Transcription termination factor Rho (474 aa).

The tract at residues 1 to 60 is disordered; it reads MTEELDNTPSPAGDIPQETLPKPLPAPEETAGEQPAAAPEENRGNAVREEEEAAPVLEQI. The region spanning 107-182 is the Rho RNA-BD domain; that stretch reads EVVVSGVMEQ…ASVISVEDIP (76 aa). Residues 226–231, 238–243, and Arg-269 contribute to the ATP site; these read GKGQRG and RGGKTV.

Belongs to the Rho family. In terms of assembly, homohexamer. The homohexamer assembles into an open ring structure.

Facilitates transcription termination by a mechanism that involves Rho binding to the nascent RNA, activation of Rho's RNA-dependent ATPase activity, and release of the mRNA from the DNA template. This Akkermansia muciniphila (strain ATCC BAA-835 / DSM 22959 / JCM 33894 / BCRC 81048 / CCUG 64013 / CIP 107961 / Muc) protein is Transcription termination factor Rho.